A 648-amino-acid polypeptide reads, in one-letter code: Macrolide export ATP-binding/permease protein MacB (648 aa).

Over 1 to 272 the chain is Cytoplasmic; sequence MTPLLELKDI…RALAANKMRT (272 aa). One can recognise an ABC transporter domain in the interval 5–243; that stretch reads LELKDIRRSY…TGGTEPVVNT (239 aa). 41-48 is a binding site for ATP; the sequence is GASGSGKS. Residues 273–293 traverse the membrane as a helical segment; sequence LLTMLGIIIGIASVVSIVVVG. Over 294–522 the chain is Periplasmic; sequence DAAKQMVLAD…TVEKTTRTLQ (229 aa). Residues 523 to 543 traverse the membrane as a helical segment; that stretch reads LFLTLVAVISLVVGGIGVMNI. The Cytoplasmic portion of the chain corresponds to 544-575; the sequence is MLVSVTERTREIGIRMAVGARASDVLQQFLIE. Residues 576–596 traverse the membrane as a helical segment; it reads AVLVCLVGGALGITLSLLIAF. Topologically, residues 597–610 are periplasmic; the sequence is TLQLFLPGWEIGFS. A helical membrane pass occupies residues 611–631; sequence PLALLLAFLCSTVTGILFGWL. Residues 632–648 are Cytoplasmic-facing; that stretch reads PARNAARLDPVDALARE.

Belongs to the ABC transporter superfamily. Macrolide exporter (TC 3.A.1.122) family. As to quaternary structure, homodimer. Part of the tripartite efflux system MacAB-TolC, which is composed of an inner membrane transporter, MacB, a periplasmic membrane fusion protein, MacA, and an outer membrane component, TolC. The complex forms a large protein conduit and can translocate molecules across both the inner and outer membranes. Interacts with MacA.

It localises to the cell inner membrane. With respect to regulation, ATPase activity is stimulated by interaction with MacA and inhibited by vanadate. In terms of biological role, part of the tripartite efflux system MacAB-TolC. MacB is a non-canonical ABC transporter that contains transmembrane domains (TMD), which form a pore in the inner membrane, and an ATP-binding domain (NBD), which is responsible for energy generation. When overexpressed, the system confers resistance against macrolides composed of 14- and 15-membered lactones but no or weak resistance against 16-membered ones. In addition, the system could also transport R-LPS or a similar glycolipid. This is Macrolide export ATP-binding/permease protein MacB from Escherichia coli (strain K12).